A 197-amino-acid chain; its full sequence is Large ribosomal subunit protein uL13A (197 aa).

S151 is modified (phosphoserine).

Belongs to the universal ribosomal protein uL13 family. As to quaternary structure, component of the large ribosomal subunit (LSU). Mature yeast ribosomes consist of a small (40S) and a large (60S) subunit. The 40S small subunit contains 1 molecule of ribosomal RNA (18S rRNA) and at least 33 different proteins. The large 60S subunit contains 3 rRNA molecules (25S, 5.8S and 5S rRNA) and at least 46 different proteins.

It localises to the cytoplasm. The protein resides in the nucleus. The protein localises to the nucleolus. In terms of biological role, component of the ribosome, a large ribonucleoprotein complex responsible for the synthesis of proteins in the cell. The small ribosomal subunit (SSU) binds messenger RNAs (mRNAs) and translates the encoded message by selecting cognate aminoacyl-transfer RNA (tRNA) molecules. The large subunit (LSU) contains the ribosomal catalytic site termed the peptidyl transferase center (PTC), which catalyzes the formation of peptide bonds, thereby polymerizing the amino acids delivered by tRNAs into a polypeptide chain. The nascent polypeptides leave the ribosome through a tunnel in the LSU and interact with protein factors that function in enzymatic processing, targeting, and the membrane insertion of nascent chains at the exit of the ribosomal tunnel. In Schizosaccharomyces pombe (strain 972 / ATCC 24843) (Fission yeast), this protein is Large ribosomal subunit protein uL13A (rpl1602).